The following is a 545-amino-acid chain: MAQLAGQPVVILPEGTQRYVGRDAQRLNILAARIIAETVRTTLGPKGMDKMLVDSLGDIVITNDGATILDEMDIQHPAAKMMVEVAKTQDKEAGDGTTTAVVIAGELLRKAEELLDQNIHPSIIIKGYALAAEKAQEILDSIARDVDVEDREILKKAAMTAITGKAAEEEREYLAEIAVEAVKQVAEKVGDRYHVDLDNIKFEKKEGGSVKDTQLIKGVVIDKEVVHPGMRKRVEGAKIALINEALEVKETETDAEIRITSPEQLQAFLEQEEKMLREMVDKIKEVGANVVFVQKGIDDLAQHYLAKYGIMAVRRVKKSDMEKLAKATGAKIVTNVRDLTPEDLGEAELVEQRKVAGENMIFVEGCKNPKAVTILIRGGTEHVVDEVERALEDAVKVVKDIVEDGKIVAAGGAPEIELAISVDEYAKEVGGKEQLAIEAFAEALKVIPRTLAGNAGLDPIETLVKVIAAHKEKGPTIGVDVFEGEPADMLERGVIAPVRVPKQAIKSAKAAIMILRIDDVIAASKLEKDKEGGKGGTRDFGSDLD.

It belongs to the TCP-1 chaperonin family. Forms a Heterooligomeric complex of two stacked eight-membered rings.

Molecular chaperone; binds unfolded polypeptides in vitro, and has a weak ATPase activity. This is Thermosome subunit beta (thsB) from Thermococcus sp. (strain KS-8).